Consider the following 198-residue polypeptide: ATP-dependent Clp protease proteolytic subunit (198 aa).

The active-site Nucleophile is S103. The active site involves H128.

The protein belongs to the peptidase S14 family. In terms of assembly, fourteen ClpP subunits assemble into 2 heptameric rings which stack back to back to give a disk-like structure with a central cavity, resembling the structure of eukaryotic proteasomes.

It is found in the cytoplasm. The enzyme catalyses Hydrolysis of proteins to small peptides in the presence of ATP and magnesium. alpha-casein is the usual test substrate. In the absence of ATP, only oligopeptides shorter than five residues are hydrolyzed (such as succinyl-Leu-Tyr-|-NHMec, and Leu-Tyr-Leu-|-Tyr-Trp, in which cleavage of the -Tyr-|-Leu- and -Tyr-|-Trp bonds also occurs).. Its function is as follows. Cleaves peptides in various proteins in a process that requires ATP hydrolysis. Has a chymotrypsin-like activity. Plays a major role in the degradation of misfolded proteins. This is ATP-dependent Clp protease proteolytic subunit from Ruthia magnifica subsp. Calyptogena magnifica.